The sequence spans 319 residues: Protein sprouty homolog 1 (319 aa).

N-acetylmethionine is present on methionine 1. 2 disordered regions span residues 54–78 and 100–160; these read TEGP…ERTH and AVLP…QPKQ. The span at 69-78 shows a compositional bias: basic and acidic residues; it reads PRQEKHERTH. The segment covering 112-131 has biased composition (low complexity); it reads SRSTSTGSAASSGSNSSASS. The SPR domain maps to 183-295; that stretch reads QCGKCKCGEC…CYDWIHRPGC (113 aa).

This sequence belongs to the sprouty family. Forms heterodimers with SPRY2. Interacts with TESK1. Interacts with CAV1 (via C-terminus).

The protein localises to the cytoplasm. Its subcellular location is the membrane. In terms of biological role, inhibits fibroblast growth factor (FGF)-induced retinal lens fiber differentiation, probably by inhibiting FGF-mediated phosphorylation of ERK1/2. Inhibits TGFB-induced epithelial-to-mesenchymal transition in lens epithelial cells. The chain is Protein sprouty homolog 1 (SPRY1) from Homo sapiens (Human).